Here is a 375-residue protein sequence, read N- to C-terminus: 2-heptyl-3-hydroxy-4(1H)-quinolone synthase (375 aa).

Belongs to the 3-hydroxybenzoate 6-hydroxylase family.

The catalysed reaction is 2-heptyl-4(1H)-quinolone + NADH + O2 + H(+) = 2-heptyl-3-hydroxy-4(1H)-quinolone + NAD(+) + H2O. Its function is as follows. Involved in the degradation pathway of the Pseudomonas aeruginosa quorum sensing signal molecule HHQ (2-heptyl-4(1H)-quinolone) to anthranilate. Catalyzes the hydroxylation of HHQ to PQS (2-heptyl-3-hydroxy-4(1H)-quinolone). In Mycobacteroides abscessus (strain ATCC 19977 / DSM 44196 / CCUG 20993 / CIP 104536 / JCM 13569 / NCTC 13031 / TMC 1543 / L948) (Mycobacterium abscessus), this protein is 2-heptyl-3-hydroxy-4(1H)-quinolone synthase.